The chain runs to 426 residues: Serine--tRNA ligase (426 aa).

Positions 36–66 are disordered; it reads KRRHLQERTQDLQSQRNTISKEIGQKKAKGE. Over residues 46–55 the composition is skewed to polar residues; it reads DLQSQRNTIS. L-serine is bound at residue 233 to 235; that stretch reads TAE. An ATP-binding site is contributed by 264-266; sequence RSE. Glu-287 serves as a coordination point for L-serine. 351–354 contributes to the ATP binding site; sequence EISS. Ser-387 serves as a coordination point for L-serine.

This sequence belongs to the class-II aminoacyl-tRNA synthetase family. Type-1 seryl-tRNA synthetase subfamily. Homodimer. The tRNA molecule binds across the dimer.

It localises to the cytoplasm. The catalysed reaction is tRNA(Ser) + L-serine + ATP = L-seryl-tRNA(Ser) + AMP + diphosphate + H(+). It catalyses the reaction tRNA(Sec) + L-serine + ATP = L-seryl-tRNA(Sec) + AMP + diphosphate + H(+). It functions in the pathway aminoacyl-tRNA biosynthesis; selenocysteinyl-tRNA(Sec) biosynthesis; L-seryl-tRNA(Sec) from L-serine and tRNA(Sec): step 1/1. Its function is as follows. Catalyzes the attachment of serine to tRNA(Ser). Is also able to aminoacylate tRNA(Sec) with serine, to form the misacylated tRNA L-seryl-tRNA(Sec), which will be further converted into selenocysteinyl-tRNA(Sec). The sequence is that of Serine--tRNA ligase from Francisella tularensis subsp. novicida (strain U112).